The primary structure comprises 492 residues: Catalase isozyme 2 (492 aa).

Residues His-65 and Asn-138 contribute to the active site. Tyr-347 is a heme binding site.

This sequence belongs to the catalase family. Homotetramer. It depends on heme as a cofactor. In terms of tissue distribution, high levels in green cotyledons, mature leaf, stem and green hypocotyl.

The protein localises to the peroxisome. The enzyme catalyses 2 H2O2 = O2 + 2 H2O. Functionally, occurs in almost all aerobically respiring organisms and serves to protect cells from the toxic effects of hydrogen peroxide. This is Catalase isozyme 2 (CAT2) from Cucurbita pepo (Vegetable marrow).